Consider the following 173-residue polypeptide: NADH-ubiquinone oxidoreductase chain 6 (173 aa).

A run of 6 helical transmembrane segments spans residues 1 to 21 (MTYF…AVAS), 27 to 47 (YGVV…LSLG), 48 to 68 (VSFV…VVFV), 87 to 107 (VVGY…VGGF), 113 to 133 (FGVI…FGGV), and 139 to 159 (CGVG…FVVL).

This sequence belongs to the complex I subunit 6 family.

The protein resides in the mitochondrion membrane. It carries out the reaction a ubiquinone + NADH + 5 H(+)(in) = a ubiquinol + NAD(+) + 4 H(+)(out). Its function is as follows. Core subunit of the mitochondrial membrane respiratory chain NADH dehydrogenase (Complex I) that is believed to belong to the minimal assembly required for catalysis. Complex I functions in the transfer of electrons from NADH to the respiratory chain. The immediate electron acceptor for the enzyme is believed to be ubiquinone. The protein is NADH-ubiquinone oxidoreductase chain 6 (MT-ND6) of Alle alle (Dovekie).